The primary structure comprises 605 residues: Pyruvate decarboxylase 2 (605 aa).

Positions 68 and 155 each coordinate substrate. Residues 433–515 (DSWFNCQKLK…FLINNGGYTI (83 aa)) are thiamine pyrophosphate binding. D483, N510, and G512 together coordinate Mg(2+). Residue E516 coordinates substrate.

Belongs to the TPP enzyme family. Homotetramer. Requires a metal cation as cofactor. Thiamine diphosphate is required as a cofactor.

It carries out the reaction a 2-oxocarboxylate + H(+) = an aldehyde + CO2. This chain is Pyruvate decarboxylase 2 (PDC2), found in Oryza sativa subsp. japonica (Rice).